The following is a 61-amino-acid chain: Large ribosomal subunit protein uL29 (61 aa).

It belongs to the universal ribosomal protein uL29 family.

This is Large ribosomal subunit protein uL29 from Xanthomonas euvesicatoria pv. vesicatoria (strain 85-10) (Xanthomonas campestris pv. vesicatoria).